Here is a 156-residue protein sequence, read N- to C-terminus: METVNEPETGEVSKDAVIVKQEKNNEYCLQDIDDKLSESAEDDGEDDTNDEDDDEDSNPKKNTQAPLELMAEFLRAEMAREYQLAKKLCQMILIYEPENPEAKEFFTLIEEMLLMEKTQNHEQDGENSDEDSSGESKGESDEELSDESSDEGEDGS.

Disordered stretches follow at residues 29–66 (LQDIDDKLSESAEDDGEDDTNDEDDDEDSNPKKNTQAP) and 116–156 (EKTQ…EDGS). 2 stretches are compositionally biased toward acidic residues: residues 39–56 (SAEDDGEDDTNDEDDDED) and 140–156 (SDEELSDESSDEGEDGS).

This Homo sapiens (Human) protein is Glutamate-rich protein 2 (ERICH2).